A 259-amino-acid polypeptide reads, in one-letter code: Proteasome assembly chaperone 2 (259 aa).

Belongs to the PSMG2 family. As to quaternary structure, forms a heterodimer with psmg1. In terms of processing, degraded by the proteasome upon completion of 20S proteasome maturation.

It localises to the nucleus. Functionally, chaperone protein which promotes assembly of the 20S proteasome as part of a heterodimer with psmg1. The chain is Proteasome assembly chaperone 2 from Xenopus laevis (African clawed frog).